The primary structure comprises 445 residues: tRNA(Ile)-lysidine synthase (445 aa).

30-35 contributes to the ATP binding site; it reads SGGLDS.

This sequence belongs to the tRNA(Ile)-lysidine synthase family.

The protein localises to the cytoplasm. The catalysed reaction is cytidine(34) in tRNA(Ile2) + L-lysine + ATP = lysidine(34) in tRNA(Ile2) + AMP + diphosphate + H(+). Its function is as follows. Ligates lysine onto the cytidine present at position 34 of the AUA codon-specific tRNA(Ile) that contains the anticodon CAU, in an ATP-dependent manner. Cytidine is converted to lysidine, thus changing the amino acid specificity of the tRNA from methionine to isoleucine. The polypeptide is tRNA(Ile)-lysidine synthase (Alkalilimnicola ehrlichii (strain ATCC BAA-1101 / DSM 17681 / MLHE-1)).